We begin with the raw amino-acid sequence, 246 residues long: tRNA (guanine-N(1)-)-methyltransferase (246 aa).

Residues Gly117 and 137 to 142 each bind S-adenosyl-L-methionine; that span reads IGDYVL.

It belongs to the RNA methyltransferase TrmD family. In terms of assembly, homodimer.

The protein resides in the cytoplasm. The catalysed reaction is guanosine(37) in tRNA + S-adenosyl-L-methionine = N(1)-methylguanosine(37) in tRNA + S-adenosyl-L-homocysteine + H(+). Its function is as follows. Specifically methylates guanosine-37 in various tRNAs. This chain is tRNA (guanine-N(1)-)-methyltransferase, found in Acinetobacter baumannii (strain AB307-0294).